A 473-amino-acid polypeptide reads, in one-letter code: ATP synthase subunit beta, chloroplastic (473 aa).

An ATP-binding site is contributed by 172–179; sequence GGAGVGKT.

It belongs to the ATPase alpha/beta chains family. In terms of assembly, F-type ATPases have 2 components, CF(1) - the catalytic core - and CF(0) - the membrane proton channel. CF(1) has five subunits: alpha(3), beta(3), gamma(1), delta(1), epsilon(1). CF(0) has four main subunits: a(1), b(1), b'(1) and c(9-12).

Its subcellular location is the plastid. The protein localises to the chloroplast thylakoid membrane. It carries out the reaction ATP + H2O + 4 H(+)(in) = ADP + phosphate + 5 H(+)(out). Produces ATP from ADP in the presence of a proton gradient across the membrane. The catalytic sites are hosted primarily by the beta subunits. The protein is ATP synthase subunit beta, chloroplastic of Equisetum arvense (Field horsetail).